A 207-amino-acid chain; its full sequence is Ribosomal RNA small subunit methyltransferase G (207 aa).

Residues Gly77, Phe82, 100-102 (ERS), and Arg141 each bind S-adenosyl-L-methionine.

The protein belongs to the methyltransferase superfamily. RNA methyltransferase RsmG family.

Its subcellular location is the cytoplasm. Functionally, specifically methylates the N7 position of a guanine in 16S rRNA. The polypeptide is Ribosomal RNA small subunit methyltransferase G (Borrelia hermsii (strain HS1 / DAH)).